The sequence spans 343 residues: tRNA N6-adenosine threonylcarbamoyltransferase (343 aa).

Positions 120 and 124 each coordinate Fe cation. Substrate contacts are provided by residues 142–146 (VVSGG), D175, G188, D192, and N281. Residue D310 participates in Fe cation binding.

This sequence belongs to the KAE1 / TsaD family. Requires Fe(2+) as cofactor.

It localises to the cytoplasm. It catalyses the reaction L-threonylcarbamoyladenylate + adenosine(37) in tRNA = N(6)-L-threonylcarbamoyladenosine(37) in tRNA + AMP + H(+). Required for the formation of a threonylcarbamoyl group on adenosine at position 37 (t(6)A37) in tRNAs that read codons beginning with adenine. Is involved in the transfer of the threonylcarbamoyl moiety of threonylcarbamoyl-AMP (TC-AMP) to the N6 group of A37, together with TsaE and TsaB. TsaD likely plays a direct catalytic role in this reaction. This Bacillus anthracis protein is tRNA N6-adenosine threonylcarbamoyltransferase.